We begin with the raw amino-acid sequence, 85 residues long: Large ribosomal subunit protein bL31B (85 aa).

It belongs to the bacterial ribosomal protein bL31 family. Type B subfamily. Part of the 50S ribosomal subunit.

This chain is Large ribosomal subunit protein bL31B, found in Pseudarthrobacter chlorophenolicus (strain ATCC 700700 / DSM 12829 / CIP 107037 / JCM 12360 / KCTC 9906 / NCIMB 13794 / A6) (Arthrobacter chlorophenolicus).